We begin with the raw amino-acid sequence, 643 residues long: Inorganic pyrophosphatase TTM1 (643 aa).

Residues 1 to 15 (MALDSSVALSPRRRH) constitute a mitochondrion transit peptide. In terms of domain architecture, CYTH spans 248–410 (NPTYILKSSK…PHTYIEQIQL (163 aa)). A helical transmembrane segment spans residues 618-638 (LESSTVPILLGLAIGCVGIFA).

Mg(2+) is required as a cofactor. In terms of tissue distribution, ubiquitously expressed in all tissues, with strong expression detected in senescent leaves.

Its subcellular location is the mitochondrion outer membrane. The enzyme catalyses diphosphate + H2O = 2 phosphate + H(+). Functionally, exhibits pyrophosphatase activity with stronger affinity for pyrophosphate (PPi), moderate affinity for ATP and ADP, and weak affinity for tripolyphosphate (PPPi). No activity observed toward uridine substrate. Positively regulates natural and dark-induced leaf senescence. The protein is Inorganic pyrophosphatase TTM1 of Arabidopsis thaliana (Mouse-ear cress).